Consider the following 191-residue polypeptide: Ribonuclease HII (191 aa).

Positions I7–K191 constitute an RNase H type-2 domain. A divalent metal cation-binding residues include D13, E14, and D103.

The protein belongs to the RNase HII family. Requires Mn(2+) as cofactor. The cofactor is Mg(2+).

The protein localises to the cytoplasm. The catalysed reaction is Endonucleolytic cleavage to 5'-phosphomonoester.. Its function is as follows. Endonuclease that specifically degrades the RNA of RNA-DNA hybrids. The chain is Ribonuclease HII from Legionella pneumophila subsp. pneumophila (strain Philadelphia 1 / ATCC 33152 / DSM 7513).